The following is a 336-amino-acid chain: Inositol 2-dehydrogenase (336 aa).

It belongs to the Gfo/Idh/MocA family. In terms of assembly, homotetramer.

It catalyses the reaction myo-inositol + NAD(+) = scyllo-inosose + NADH + H(+). Functionally, involved in the oxidation of myo-inositol (MI) to 2-keto-myo-inositol (2KMI or 2-inosose). This chain is Inositol 2-dehydrogenase, found in Agrobacterium fabrum (strain C58 / ATCC 33970) (Agrobacterium tumefaciens (strain C58)).